Here is a 120-residue protein sequence, read N- to C-terminus: U15-barytoxin-Tl1c (120 aa).

The N-terminal stretch at 1 to 16 (MKLFMVLVASFAFAVA) is a signal peptide. Intrachain disulfides connect Cys55–Cys73, Cys66–Cys79, Cys70–Cys118, and Cys72–Cys89.

It belongs to the neurotoxin 03 (Tx2) family. 03 subfamily. As to expression, expressed by the venom gland.

The protein resides in the secreted. Its function is as follows. Ion channel inhibitor. The polypeptide is U15-barytoxin-Tl1c (Trittame loki (Brush-footed trapdoor spider)).